Consider the following 548-residue polypeptide: Natural resistance-associated macrophage protein 1 (548 aa).

The segment at 1–38 is disordered; that stretch reads MSGDTGPPKQGGTRYGSISSPPSPEPQQAPPGGTYLSE. Residues 1-55 lie on the Cytoplasmic side of the membrane; it reads MSGDTGPPKQGGTRYGSISSPPSPEPQQAPPGGTYLSEKIPIPDTESGTFSLRKL. Residues 56–73 traverse the membrane as a helical segment; that stretch reads WAFTGPGFLMSIAFLDPG. At 74-82 the chain is on the extracellular side; that stretch reads NIESDLQAG. Residues 83–102 form a helical membrane-spanning segment; the sequence is AVAGFKLLWVLLWATVLGLL. Residues 103-139 lie on the Cytoplasmic side of the membrane; sequence CQRLAARLGVVTGKDLGEVCHLYYPKVPRILLWLTIE. The helical transmembrane segment at 140–160 threads the bilayer; that stretch reads LAIVGSDMQEVIGTAIAFSLL. Residues 161–164 are Extracellular-facing; sequence SAGR. A helical membrane pass occupies residues 165 to 184; the sequence is IPLWGGVLITVVDTFFFLFL. The Cytoplasmic portion of the chain corresponds to 185 to 193; that stretch reads DNYGLRKLE. Residues 194–214 traverse the membrane as a helical segment; sequence AFFGFLITIMALTFGYEYVVA. The Extracellular segment spans residues 215–237; that stretch reads QPAQGALLQGLFLPSCPGCGQPE. A helical membrane pass occupies residues 238–256; sequence LLQAVGIIGAIIMPHNIYL. Over 257 to 284 the chain is Cytoplasmic; the sequence is HSSLVKSREVDRSRRADIREANMYFLIE. The helical transmembrane segment at 285–304 threads the bilayer; sequence ATIALSVSFLINLFVMAVFG. The Extracellular segment spans residues 305–346; sequence QAFYKQTNQAAFNICADSSLHDYAPIFPRNNLTVAVDIYQGG. Asparagine 335 carries an N-linked (GlcNAc...) asparagine glycan. Residues 347-366 form a helical membrane-spanning segment; the sequence is VILGCLFGPPALYIWAVGLL. The Cytoplasmic portion of the chain corresponds to 367-397; the sequence is AAGQSSTMTGTYAGQFVMEGFLKLRWSRFAR. A helical transmembrane segment spans residues 398-415; sequence VLLTRSCAILPTVLLAVF. The Extracellular segment spans residues 416 to 426; sequence RDLRDLSGLND. The helical transmembrane segment at 427–447 threads the bilayer; it reads LLNVLQSLLLPFAVLPILTFT. The Cytoplasmic portion of the chain corresponds to 448–463; that stretch reads SMPALMQEFANGLVSK. The helical transmembrane segment at 464-485 threads the bilayer; that stretch reads VITSSIMVLVCAVNLYFVISYL. Residues 486–493 lie on the Extracellular side of the membrane; the sequence is PSLPHPAY. Residues 494 to 513 traverse the membrane as a helical segment; sequence FSLVALLAAAYLGLTTYLVW. Residues 514-548 lie on the Cytoplasmic side of the membrane; that stretch reads TCLITQGATLLAHSSHQRFLYGLPEEDQEKGRTSG.

The protein belongs to the NRAMP family.

The protein resides in the late endosome membrane. Its subcellular location is the lysosome membrane. The enzyme catalyses Zn(2+)(in) + H(+)(out) = Zn(2+)(out) + H(+)(in). It catalyses the reaction Fe(2+)(in) + H(+)(out) = Fe(2+)(out) + H(+)(in). It carries out the reaction Mn(2+)(in) + H(+)(out) = Mn(2+)(out) + H(+)(in). Functionally, macrophage-specific antiporter that fluxes metal ions in either direction against a proton gradient. Localized to late endosomal lysosomal membranes, delivers bivalent cations from the cytosol into these acidic compartments where they may directly affect antimicrobial activity. Involved in iron metabolism and host natural resistance to infection with intracellular parasites. Pathogen resistance involves sequestration of Fe(2+) and Mn(2+), cofactors of both prokaryotic and eukaryotic catalases and superoxide dismutases, not only to protect the macrophage against its own generation of reactive oxygen species, but to deny the cations to the pathogen for synthesis of its protective enzymes. In Bos taurus (Bovine), this protein is Natural resistance-associated macrophage protein 1 (SLC11A1).